The sequence spans 712 residues: uncharacterized protein (712 aa).

Disordered stretches follow at residues 1-46 (MAKI…NNLN), 107-264 (NIKP…IPQA), and 370-389 (QPQH…QQNQ). 3 stretches are compositionally biased toward low complexity: residues 10–46 (INNS…NNLN), 107–143 (NIKP…SNSS), and 161–173 (TFDN…NSSN). The segment covering 178 to 187 (ISPTTSPQLE) has biased composition (polar residues). Low complexity-rich tracts occupy residues 188–198 (QHQQYQQQQHQ) and 241–264 (PLQQ…IPQA).

This is an uncharacterized protein from Dictyostelium discoideum (Social amoeba).